The chain runs to 210 residues: Na(+)-translocating NADH-quinone reductase subunit D (210 aa).

5 helical membrane passes run 42–62, 72–92, 103–123, 131–151, and 178–198; these read FVMTLAVTFVTALSNFSVSLI, IIVQMAIIASLVIVVDQVLKA, VFVGLIITNCIVMGRAEAFAM, LIDGIGNGLGYGFVLITVGFF, and NGLMLLAPSAFFLIGFLIWVI.

The protein belongs to the NqrDE/RnfAE family. In terms of assembly, composed of six subunits; NqrA, NqrB, NqrC, NqrD, NqrE and NqrF.

It localises to the cell inner membrane. It catalyses the reaction a ubiquinone + n Na(+)(in) + NADH + H(+) = a ubiquinol + n Na(+)(out) + NAD(+). In terms of biological role, NQR complex catalyzes the reduction of ubiquinone-1 to ubiquinol by two successive reactions, coupled with the transport of Na(+) ions from the cytoplasm to the periplasm. NqrA to NqrE are probably involved in the second step, the conversion of ubisemiquinone to ubiquinol. This Vibrio parahaemolyticus serotype O3:K6 (strain RIMD 2210633) protein is Na(+)-translocating NADH-quinone reductase subunit D.